The sequence spans 151 residues: Small ribosomal subunit protein uS19 (151 aa).

Alanine 2 carries the post-translational modification N-acetylalanine.

This sequence belongs to the universal ribosomal protein uS19 family.

Negatively regulates lifespan. The protein is Small ribosomal subunit protein uS19 of Caenorhabditis elegans.